The following is an 808-amino-acid chain: Phenylalanine--tRNA ligase beta subunit (808 aa).

The 118-residue stretch at 40 to 157 folds into the tRNA-binding domain; that stretch reads NKGATNVVVG…QSVEPGQDAL (118 aa). Residues 411–486 enclose the B5 domain; it reads RSERVIALDL…RLYGYDELPS (76 aa). Mg(2+)-binding residues include D464, D470, E473, and E474. The FDX-ACB domain maps to 714-807; the sequence is PRYPAITRDM…VQKQTGAVLR (94 aa).

This sequence belongs to the phenylalanyl-tRNA synthetase beta subunit family. Type 1 subfamily. In terms of assembly, tetramer of two alpha and two beta subunits. Requires Mg(2+) as cofactor.

It localises to the cytoplasm. It carries out the reaction tRNA(Phe) + L-phenylalanine + ATP = L-phenylalanyl-tRNA(Phe) + AMP + diphosphate + H(+). This is Phenylalanine--tRNA ligase beta subunit from Shouchella clausii (strain KSM-K16) (Alkalihalobacillus clausii).